We begin with the raw amino-acid sequence, 168 residues long: NADH-quinone oxidoreductase subunit I (168 aa).

4Fe-4S ferredoxin-type domains are found at residues 58–88 (LRTY…IEAQ) and 99–128 (VRYD…EGPN). C68, C71, C74, C78, C108, C111, C114, and C118 together coordinate [4Fe-4S] cluster.

Belongs to the complex I 23 kDa subunit family. NDH-1 is composed of 14 different subunits. Subunits NuoA, H, J, K, L, M, N constitute the membrane sector of the complex. The cofactor is [4Fe-4S] cluster.

The protein resides in the cell inner membrane. It carries out the reaction a quinone + NADH + 5 H(+)(in) = a quinol + NAD(+) + 4 H(+)(out). Functionally, NDH-1 shuttles electrons from NADH, via FMN and iron-sulfur (Fe-S) centers, to quinones in the respiratory chain. The immediate electron acceptor for the enzyme in this species is believed to be ubiquinone. Couples the redox reaction to proton translocation (for every two electrons transferred, four hydrogen ions are translocated across the cytoplasmic membrane), and thus conserves the redox energy in a proton gradient. This is NADH-quinone oxidoreductase subunit I from Ehrlichia ruminantium (strain Gardel).